The sequence spans 343 residues: D-beta-hydroxybutyrate dehydrogenase, mitochondrial (343 aa).

A mitochondrion-targeting transit peptide spans 1-46 (MLAARLSRPLSQLPGKALSVRDRENGTRHTLLFYPASFSPDTRRTY). 60 to 84 (ITGCDSGFGFSLAKHLHSKGFLVFA) contributes to the NAD(+) binding site. N6-acetyllysine occurs at positions 73 and 97. Lysine 103 carries the N6-acetyllysine; alternate modification. N6-succinyllysine; alternate is present on lysine 103. Lysine 132 and lysine 177 each carry N6-acetyllysine. Methionine 196 contacts substrate. Cysteine 209 (proton acceptor) is an active-site residue. The residue at position 212 (lysine 212) is an N6-acetyllysine. An O-linked (GlcNAc) serine glycan is attached at serine 219. Serine 246 is modified (phosphoserine). Lysine 258 carries the N6-acetyllysine modification. Lysine 259 is modified (N6-acetyllysine; alternate). Lysine 259 carries the N6-succinyllysine; alternate modification. Position 280 is an N6-acetyllysine (lysine 280).

This sequence belongs to the short-chain dehydrogenases/reductases (SDR) family. As to quaternary structure, homotetramer. Post-translationally, acetylation of Lys-132 is observed in liver mitochondria from fasted mice but not from fed mice.

Its subcellular location is the mitochondrion inner membrane. It localises to the mitochondrion matrix. It catalyses the reaction (R)-3-hydroxybutanoate + NAD(+) = acetoacetate + NADH + H(+). Its activity is regulated as follows. Requires phosphatidylcholine as an allosteric activator for enzymatic activity. This is D-beta-hydroxybutyrate dehydrogenase, mitochondrial from Mus musculus (Mouse).